Here is a 411-residue protein sequence, read N- to C-terminus: Diaminobutyrate--2-oxoglutarate transaminase (411 aa).

An N6-(pyridoxal phosphate)lysine modification is found at lysine 262.

The protein belongs to the class-III pyridoxal-phosphate-dependent aminotransferase family. Requires pyridoxal 5'-phosphate as cofactor.

It carries out the reaction L-2,4-diaminobutanoate + 2-oxoglutarate = L-aspartate 4-semialdehyde + L-glutamate. The protein operates within amine and polyamine biosynthesis; ectoine biosynthesis; L-ectoine from L-aspartate 4-semialdehyde: step 1/3. In terms of biological role, catalyzes reversively the conversion of L-aspartate beta-semialdehyde (ASA) to L-2,4-diaminobutyrate (DABA) by transamination with L-glutamate. This chain is Diaminobutyrate--2-oxoglutarate transaminase (ectB), found in Vibrio cholerae serotype O1 (strain ATCC 39315 / El Tor Inaba N16961).